Consider the following 950-residue polypeptide: MDEENMTKSEEQQPLSLQKALQQCELVQNMIDLSISNLEGLRTKCATSNDLTQKEIRTLESKLVKYFSRQLSCKKKVALQERNAELDGFPQLRHWFRIVDVRKEVLEEISPGQLSLEDLLEMTDEQVCETVEKYGANREECARLNASLSCLRNVHMSGGNLSKQDWTIQWPTTETGKENNPVCPPEPTPWIRTHLSQSPRVPSKCVQHYCHTSPTPGAPVYTHVDRLTVDAYPGLCPPPPLESGHRSLPPSPRQRHAVRTPPRTPNIVTTVTPPGTPPMRKKNKLKPPGTPPPSSRKLIHLIPGFTALHRSKSHEFQLGHRVDEAHTPKAKKKSKPLNLKIHSSVGSCENIPSQQRSPLLSERSLRSFFVGHAPFLPSTPPVHTEANFSANTLSVPRWSPQIPRRDLGNSIKHRFSTKYWMSQTCTVCGKGMLFGLKCKNCKLKCHNKCTKEAPPCHLLIIHRGDPARLVRTESVPCDINNPLRKPPRYSDLHISQTLPKTNKINKDHIPVPYQPDSSSNPSSTTSSTPSSPAPPLPPSATPPSPLHPSPQCTRQQKNFNLPASHYYKYKQQFIFPDVVPVPETPTRAPQVILHPVTSNPILEGNPLLQIEVEPTSENEEVHDEAEESEDDFEEMNLSLLSARSFPRKASQTSIFLQEWDIPFEQLEIGELIGKGRFGQVYHGRWHGEVAIRLIDIERDNEDQLKAFKREVMAYRQTRHENVVLFMGACMSPPHLAIITSLCKGRTLYSVVRDAKIVLDVNKTRQIAQEIVKGMGYLHAKGILHKDLKSKNVFYDNGKVVITDFGLFSISGVLQAGRREDKLRIQNGWLCHLAPEIIRQLSPDTEEDKLPFSKHSDVFALGTIWYELHAREWPFKTQPAEAIIWQMGTGMKPNLSQIGMGKEISDILLFCWAFEQEERPTFTKLMDMLEKLPKRNRRLSHPGHFWKSAEL.

The segment at 239 to 296 (PPLESGHRSLPPSPRQRHAVRTPPRTPNIVTTVTPPGTPPMRKKNKLKPPGTPPPSSR) is disordered. Low complexity predominate over residues 259-273 (RTPPRTPNIVTTVTP). Threonine 272 and threonine 276 each carry phosphothreonine. The Phorbol-ester/DAG-type zinc finger occupies 412-456 (KHRFSTKYWMSQTCTVCGKGMLFGLKCKNCKLKCHNKCTKEAPPC). The Zn(2+) site is built by histidine 413, cysteine 425, cysteine 428, cysteine 438, cysteine 441, histidine 446, cysteine 449, and cysteine 456. The residue at position 474 (serine 474) is a Phosphoserine; by MARK3. Threonine 497 carries the post-translational modification Phosphothreonine. The segment at 498–556 (LPKTNKINKDHIPVPYQPDSSSNPSSTTSSTPSSPAPPLPPSATPPSPLHPSPQCTRQQ) is disordered. Residues 517-530 (SSSNPSSTTSSTPS) show a composition bias toward low complexity. The segment covering 531–548 (SPAPPLPPSATPPSPLHP) has biased composition (pro residues). One can recognise a Protein kinase domain in the interval 666-931 (LEIGELIGKG…TKLMDMLEKL (266 aa)). 672 to 680 (IGKGRFGQV) is an ATP binding site. Aspartate 786 (proton donor/acceptor) is an active-site residue. Lysine 788 and aspartate 803 together coordinate ATP.

This sequence belongs to the protein kinase superfamily. TKL Ser/Thr protein kinase family. In terms of assembly, heterodimerizes (via N-terminus) with BRAF (via N-terminus) in a MAP2K1/MEK1-dependent manner. Interacts with BRAF; this increases the low intrinsic protein kinase activity of KSR2. Interacts with MAP2K1, forming a heterodimer that can dimerize to form a heterotetramer. Interacts with MAP3K8, MAPK, RAS and RAF. Post-translationally, phosphorylated on Ser-474 by MARK3. In terms of tissue distribution, mainly expressed in brain and kidney.

The protein localises to the cytoplasm. It localises to the membrane. The catalysed reaction is L-seryl-[protein] + ATP = O-phospho-L-seryl-[protein] + ADP + H(+). It carries out the reaction L-threonyl-[protein] + ATP = O-phospho-L-threonyl-[protein] + ADP + H(+). With respect to regulation, kinase activity is inhibited by ASC24. Its function is as follows. Location-regulated scaffold connecting MEK to RAF. Has very low protein kinase activity and can phosphorylate MAP2K1 at several Ser and Thr residues with very low efficiency (in vitro). Acts as MAP2K1/MEK1-dependent allosteric activator of BRAF; upon binding to MAP2K1/MEK1, dimerizes with BRAF and promotes BRAF-mediated phosphorylation of MAP2K1/MEK1. Interaction with BRAF enhances KSR2-mediated phosphorylation of MAP2K1 (in vitro). Blocks MAP3K8 kinase activity and MAP3K8-mediated signaling. Acts as a negative regulator of MAP3K3-mediated activation of ERK, JNK and NF-kappa-B pathways, inhibiting MAP3K3-mediated interleukin-8 production. The chain is Kinase suppressor of Ras 2 from Homo sapiens (Human).